Here is a 93-residue protein sequence, read N- to C-terminus: UPF0250 protein PSPA7_1111 (93 aa).

This sequence belongs to the UPF0250 family.

In Pseudomonas paraeruginosa (strain DSM 24068 / PA7) (Pseudomonas aeruginosa (strain PA7)), this protein is UPF0250 protein PSPA7_1111.